The following is a 225-amino-acid chain: Lipoarabinomannan carrier protein LprG (225 aa).

An N-terminal signal peptide occupies residues 1–21 (MRNRIRLALIPVAVAAIALAG). Residue Cys22 is the site of N-palmitoyl cysteine attachment. Cys22 is lipidated: S-diacylglycerol cysteine.

It belongs to the LppX/LprAFG lipoprotein family. In terms of processing, modified by Lgt on Cys-22 with an S-linked diacylglyceral, signal peptide is removed by LspA, Cys-22 is further modifed with a fatty acid on its amino group by Lnt yielding a triacylated protein.

Its subcellular location is the cell inner membrane. Functionally, helps membrane protein MAB_2807 (P55) transport triacylglycerides (TAG) across the inner cell membrane into the periplasm and probably ultimately to the outer membrane. Binds TAG in its hydrophobic cavity and transfers it between lipid bilayers. TAG probably regulates lipid metabolism and growth regulation and plays a structural role in the outer membrane. Also binds mannosides, lipoarabinomannan and lipomannan and various glycolipids in the same cavity. This Mycobacteroides abscessus (strain ATCC 19977 / DSM 44196 / CCUG 20993 / CIP 104536 / JCM 13569 / NCTC 13031 / TMC 1543 / L948) (Mycobacterium abscessus) protein is Lipoarabinomannan carrier protein LprG.